Consider the following 372-residue polypeptide: Dual-specificity RNA methyltransferase RlmN (372 aa).

Glu92 acts as the Proton acceptor in catalysis. The region spanning 98–337 (ETDRATLCVS…VILRKTRGDD (240 aa)) is the Radical SAM core domain. Cysteines 105 and 342 form a disulfide. The [4Fe-4S] cluster site is built by Cys112, Cys116, and Cys119. Residues 166 to 167 (GE), Ser198, 220 to 222 (SLH), and Asn299 contribute to the S-adenosyl-L-methionine site. Cys342 functions as the S-methylcysteine intermediate in the catalytic mechanism.

The protein belongs to the radical SAM superfamily. RlmN family. It depends on [4Fe-4S] cluster as a cofactor.

Its subcellular location is the cytoplasm. It carries out the reaction adenosine(2503) in 23S rRNA + 2 reduced [2Fe-2S]-[ferredoxin] + 2 S-adenosyl-L-methionine = 2-methyladenosine(2503) in 23S rRNA + 5'-deoxyadenosine + L-methionine + 2 oxidized [2Fe-2S]-[ferredoxin] + S-adenosyl-L-homocysteine. The catalysed reaction is adenosine(37) in tRNA + 2 reduced [2Fe-2S]-[ferredoxin] + 2 S-adenosyl-L-methionine = 2-methyladenosine(37) in tRNA + 5'-deoxyadenosine + L-methionine + 2 oxidized [2Fe-2S]-[ferredoxin] + S-adenosyl-L-homocysteine. Functionally, specifically methylates position 2 of adenine 2503 in 23S rRNA and position 2 of adenine 37 in tRNAs. m2A2503 modification seems to play a crucial role in the proofreading step occurring at the peptidyl transferase center and thus would serve to optimize ribosomal fidelity. This Histophilus somni (strain 129Pt) (Haemophilus somnus) protein is Dual-specificity RNA methyltransferase RlmN.